A 471-amino-acid chain; its full sequence is MPN domain-containing protein (471 aa).

Residues 1–10 (MAAPEPLSPA) show a composition bias toward low complexity. The segment at 1–63 (MAAPEPLSPA…GGGGAGAGGC (63 aa)) is disordered. Position 2 is an N-acetylalanine (Ala2). Residue Ser8 is modified to Phosphoserine. Residues 16–29 (EAPEEDEDEAEAED) show a composition bias toward acidic residues. The segment covering 36–63 (GAGGGRSGGGGSSVSGGGGGGGAGAGGC) has biased composition (gly residues). Residues 71 to 166 (TRRAVTLRVL…KYKATWLRLH (96 aa)) enclose the RAMA domain. DNA-binding residues include Ser123, Ser125, and Trp145. Residues 170-229 (TPATAADESPASEGEEEELLMEEEEEDVLAGVSAEDKSRRPLGKSPSEPAHPEATTPGKR) are disordered. Phosphoserine occurs at positions 178 and 181. The span at 182–197 (EGEEEELLMEEEEEDV) shows a compositional bias: acidic residues. The region spanning 272 to 407 (VAVSSNVLFL…PESKISPFWV (136 aa)) is the MPN domain. Positions 349, 351, and 362 each coordinate Zn(2+). The JAMM motif signature appears at 349–362 (HSHPHSPALPSLQD).

Belongs to the peptidase M67 family. As to quaternary structure, monomer. Mainly monomoric, but when binds to dsDNA, forms homotetramer assembled into two homodimers. May interact with histones; this interaction is facilitated by dsDNA binding. Post-translationally, degraded following binding to N(6)-methyladenosine methylated DNA (m6A).

Probable protease. Acts as a sensor of N(6)-methyladenosine methylation on DNA (m6A): recognizes and binds m6A DNA, leading to its degradation. Binds only double strand DNA (dsDNA) in a sequence-independent manner. This Homo sapiens (Human) protein is MPN domain-containing protein.